The primary structure comprises 43 residues: Delta-actitoxin-Bca1a (43 aa).

3 cysteine pairs are disulfide-bonded: Cys-1–Cys-41, Cys-3–Cys-31, and Cys-24–Cys-42.

The protein localises to the secreted. It localises to the nematocyst. Functionally, binds specifically to voltage-gated sodium channels (Nav), thereby delaying their inactivation during signal transduction. Thus it strongly stimulates mammalian cardiac muscle contraction. This chain is Delta-actitoxin-Bca1a, found in Bunodosoma capense (Knobbly sea anemone).